Reading from the N-terminus, the 1380-residue chain is Receptor-type adenylate cyclase A (1380 aa).

The Cytoplasmic segment spans residues 1 to 34 (MAMQIRPSLGGCLRHGGAGDHAARRLSRLRAAKV). Residues 35 to 55 (FVPTAVVCVLLCCAPWVMAEI) traverse the membrane as a helical segment. Topologically, residues 56-891 (TNDAEREPVY…SHALTPAQRN (836 aa)) are extracellular. Asparagine 422, asparagine 478, asparagine 497, and asparagine 567 each carry an N-linked (GlcNAc...) asparagine glycan. Residues 892-912 (GLIAGCVVGAVVLIATCTLLL) traverse the membrane as a helical segment. Topologically, residues 913–1380 (YCCMDNRNND…NPHYARHAFE (468 aa)) are cytoplasmic. Positions 933–1087 (TLLFTDIESS…DTSNMAARTE (155 aa)) constitute a Guanylate cyclase domain. Residues aspartate 938 and aspartate 981 each contribute to the Mg(2+) site. The disordered stretch occupies residues 1270-1298 (LAREGDSAAGGVRPRLPGSPVTSLPAGGS).

It belongs to the adenylyl cyclase class-3 family. Mg(2+) serves as cofactor.

It is found in the membrane. The enzyme catalyses ATP = 3',5'-cyclic AMP + diphosphate. In terms of biological role, could act as a receptor for an unknown ligand. The sequence is that of Receptor-type adenylate cyclase A (RAC-A) from Leishmania donovani.